A 32-amino-acid polypeptide reads, in one-letter code: uncharacterized protein (32 aa).

The helical transmembrane segment at Ile3–Phe23 threads the bilayer.

Its subcellular location is the cell inner membrane. This is an uncharacterized protein from Escherichia coli (strain K12).